Consider the following 462-residue polypeptide: Ribosomal oxygenase 2 (462 aa).

The segment at 1-24 (MPKKARPAGDGKEQGPAPKQVKVE) is disordered. In terms of domain architecture, JmjC spans 139–271 (QPQRFKDELW…SSWGDFLLDT (133 aa)). Positions 179, 181, and 240 each coordinate Fe cation. At Ser-308 the chain carries Phosphoserine.

This sequence belongs to the ROX family. MINA53 subfamily. Fe(2+) is required as a cofactor.

The protein localises to the nucleus. It is found in the nucleolus. The enzyme catalyses L-histidyl-[ribosomal protein uL15] + 2-oxoglutarate + O2 = (3S)-3-hydroxy-L-histidyl-[ribosomal protein uL15] + succinate + CO2. It carries out the reaction L-histidyl-[protein] + 2-oxoglutarate + O2 = (3S)-3-hydroxy-L-histidyl-[protein] + succinate + CO2. Its function is as follows. Oxygenase that can act as both a histone lysine demethylase and a ribosomal histidine hydroxylase. Is involved in the demethylation of trimethylated 'Lys-9' on histone H3 (H3K9me3), leading to an increase in ribosomal RNA expression. Also catalyzes the hydroxylation of 60S ribosomal protein L27a on 'His-39'. May play an important role in cell growth and survival. May be involved in ribosome biogenesis, most likely during the assembly process of pre-ribosomal particles. The sequence is that of Ribosomal oxygenase 2 (RIOX2) from Bos taurus (Bovine).